The primary structure comprises 330 residues: Putative [LysW]-L-2-aminoadipate/[LysW]-L-glutamate phosphate reductase (330 aa).

NADP(+) is bound by residues serine 10–isoleucine 13 and serine 34–lysine 36. Cysteine 142 is an active-site residue. NADP(+) is bound at residue asparagine 297.

This sequence belongs to the NAGSA dehydrogenase family. Type 1 subfamily. LysY sub-subfamily.

The protein localises to the cytoplasm. The enzyme catalyses [amino-group carrier protein]-C-terminal-N-(1-carboxy-5-oxopentan-1-yl)-L-glutamine + phosphate + NADP(+) = [amino-group carrier protein]-C-terminal-N-(1-carboxy-5-phosphooxy-5-oxopentan-1-yl)-L-glutamine + NADPH + H(+). The catalysed reaction is [amino-group carrier protein]-C-terminal-gamma-(L-glutamyl-5-semialdehyde)-L-glutamate + phosphate + NADP(+) = [amino-group carrier protein]-C-terminal-gamma-(5-phospho-L-glutamyl)-L-glutamate + NADPH + H(+). It participates in amino-acid biosynthesis; L-lysine biosynthesis via AAA pathway; L-lysine from L-alpha-aminoadipate (Thermus route): step 3/5. The protein operates within amino-acid biosynthesis; L-arginine biosynthesis. Functionally, involved in both the arginine and lysine biosynthetic pathways. This is Putative [LysW]-L-2-aminoadipate/[LysW]-L-glutamate phosphate reductase from Pyrococcus abyssi (strain GE5 / Orsay).